A 644-amino-acid chain; its full sequence is MVCSITLLKVRSKRHLLSYLGVVGVGIAGLCIYRSVWGSRPFLERLARADSLIAQERKGAALRGLARMVGHARESSQYLSIAKRQMELSASAAALRTLQRGIRRSADDGRLAALVIHLLLREARFEEAISYVPRVVHKGYESIGAEALIKAALIGSRTGGDSPSRGSFHSERAEHVPEEPVEFSQVQGGRDQAHVTAFPLDRGEEQFRVEPSPPIRHTTGIALARIAPALWLAAFGVTGMHAFLQNAACAYARVGELHAAFRLYSRILGTEAPENTAFWATVAYDAGQFSLVFELLPISLARADLFGTYSAASTHARTHLLLAADAAFDGGDRARARAFWYAYVDRFPGTSTHALYNLALTAPHAQERVRMLAQCVEGDKTYYPAVACYARESIAFRAAHRQRDSVTELLSERGVYSVQMEQEHFLSPHFPVEARSLLAELAQEAMHGRADVRFALEYFRFCYPAQKRLQGSRGALWQLLEVFPVDTQVRRYARWFFFRIGEYESAFGLSDAGGGPEDAFYRALAAASRTGRVESILGGLVEATRAVEARSAAFANIAIVLERMGKKTAAAEHFVLAADEATRESVRQLQKEAGEGEAEEHPRARPAAGKAQRWREWYQRAGQLLQQQGKTVAARALLQRAQAR.

Residues 16–38 (LLSYLGVVGVGIAGLCIYRSVWG) form a helical membrane-spanning segment. Basic and acidic residues predominate over residues 586-603 (VRQLQKEAGEGEAEEHPR). The interval 586 to 613 (VRQLQKEAGEGEAEEHPRARPAAGKAQR) is disordered.

Its subcellular location is the membrane. This is an uncharacterized protein from Treponema pallidum (strain Nichols).